We begin with the raw amino-acid sequence, 601 residues long: NAD-dependent malic enzyme 59 kDa isoform, mitochondrial (601 aa).

The transit peptide at 1–18 directs the protein to the mitochondrion; the sequence is MWRVARSAASTFRRTRRL. Residue Tyr129 is the Proton donor of the active site. Arg182 lines the NAD(+) pocket. The Proton acceptor role is filled by Lys200. Residues Glu271, Asp272, and Asp295 each coordinate a divalent metal cation. NAD(+) is bound by residues Asp295 and Asn444.

Belongs to the malic enzymes family. Heterodimer of two related subunits. Mg(2+) is required as a cofactor. The cofactor is Mn(2+).

The protein localises to the mitochondrion matrix. It catalyses the reaction (S)-malate + NAD(+) = pyruvate + CO2 + NADH. The protein is NAD-dependent malic enzyme 59 kDa isoform, mitochondrial of Solanum tuberosum (Potato).